Reading from the N-terminus, the 180-residue chain is Large ribosomal subunit protein uL5 (180 aa).

Belongs to the universal ribosomal protein uL5 family. Part of the 50S ribosomal subunit; part of the 5S rRNA/L5/L18/L25 subcomplex. Contacts the 5S rRNA and the P site tRNA. Forms a bridge to the 30S subunit in the 70S ribosome.

Functionally, this is one of the proteins that bind and probably mediate the attachment of the 5S RNA into the large ribosomal subunit, where it forms part of the central protuberance. In the 70S ribosome it contacts protein S13 of the 30S subunit (bridge B1b), connecting the 2 subunits; this bridge is implicated in subunit movement. Contacts the P site tRNA; the 5S rRNA and some of its associated proteins might help stabilize positioning of ribosome-bound tRNAs. The polypeptide is Large ribosomal subunit protein uL5 (Limosilactobacillus reuteri (strain DSM 20016) (Lactobacillus reuteri)).